Consider the following 61-residue polypeptide: Small ribosomal subunit protein uS14 (61 aa).

Zn(2+)-binding residues include C24, C27, C40, and C43.

This sequence belongs to the universal ribosomal protein uS14 family. Zinc-binding uS14 subfamily. In terms of assembly, part of the 30S ribosomal subunit. Contacts proteins S3 and S10. The cofactor is Zn(2+).

Binds 16S rRNA, required for the assembly of 30S particles and may also be responsible for determining the conformation of the 16S rRNA at the A site. In Carboxydothermus hydrogenoformans (strain ATCC BAA-161 / DSM 6008 / Z-2901), this protein is Small ribosomal subunit protein uS14.